We begin with the raw amino-acid sequence, 196 residues long: Ribosome maturation factor RimP (196 aa).

It belongs to the RimP family.

The protein resides in the cytoplasm. Functionally, required for maturation of 30S ribosomal subunits. The polypeptide is Ribosome maturation factor RimP (Lawsonia intracellularis (strain PHE/MN1-00)).